Consider the following 68-residue polypeptide: MPDEMIEVPCPICQKSVPWINESTFRPFCSKRCQLIDLGEWAAEEKAIPSDTADFAMDPNMSDGWSIK.

Residues Cys10, Cys13, Cys29, and Cys33 each contribute to the Zn(2+) site.

It belongs to the DNA gyrase inhibitor YacG family. As to quaternary structure, interacts with GyrB. Requires Zn(2+) as cofactor.

In terms of biological role, inhibits all the catalytic activities of DNA gyrase by preventing its interaction with DNA. Acts by binding directly to the C-terminal domain of GyrB, which probably disrupts DNA binding by the gyrase. The chain is DNA gyrase inhibitor YacG from Haemophilus influenzae (strain PittGG).